We begin with the raw amino-acid sequence, 243 residues long: GrpE protein homolog, mitochondrial (243 aa).

Positions 56–79 are disordered; that stretch reads KKEEPKDENDAAAAEEDANLTEEQ.

Belongs to the GrpE family. Component of the PAM complex, at least composed of mtHsp70, MGE1, TIM44, PAM16, PAM17 and PAM18.

The protein localises to the mitochondrion matrix. Its function is as follows. Essential component of the PAM complex, a complex required for the translocation of transit peptide-containing proteins from the inner membrane into the mitochondrial matrix in an ATP-dependent manner. Seems to control the nucleotide-dependent binding of SSC1 to substrate proteins. The sequence is that of GrpE protein homolog, mitochondrial (mge1) from Kluyveromyces lactis (strain ATCC 8585 / CBS 2359 / DSM 70799 / NBRC 1267 / NRRL Y-1140 / WM37) (Yeast).